The following is a 335-amino-acid chain: Vitamin B12 import system permease protein BtuC (335 aa).

8 helical membrane passes run 25 to 45 (LVVM…VWIW), 67 to 87 (MAVI…QALF), 94 to 113 (PGLL…AVLL), 117 to 139 (LLPI…SILL), 153 to 173 (LLVG…AVYF), 243 to 263 (VLAI…ISFI), 281 to 301 (RLLA…DVVA), and 309 to 329 (ELPI…WLLI).

Belongs to the binding-protein-dependent transport system permease family. FecCD subfamily. As to quaternary structure, the complex is composed of two ATP-binding proteins (BtuD), two transmembrane proteins (BtuC) and a solute-binding protein (BtuF).

Its subcellular location is the cell inner membrane. Part of the ABC transporter complex BtuCDF involved in vitamin B12 import. Involved in the translocation of the substrate across the membrane. This Yersinia pseudotuberculosis serotype O:1b (strain IP 31758) protein is Vitamin B12 import system permease protein BtuC.